The following is a 188-amino-acid chain: dCTP deaminase (188 aa).

DCTP contacts are provided by residues K111 to R116, T135 to E137, Q156, Y170, and Q180. E137 (proton donor/acceptor) is an active-site residue.

Belongs to the dCTP deaminase family. As to quaternary structure, homotrimer.

It carries out the reaction dCTP + H2O + H(+) = dUTP + NH4(+). It participates in pyrimidine metabolism; dUMP biosynthesis; dUMP from dCTP (dUTP route): step 1/2. Its function is as follows. Catalyzes the deamination of dCTP to dUTP. The polypeptide is dCTP deaminase (Laribacter hongkongensis (strain HLHK9)).